A 506-amino-acid chain; its full sequence is Anaerobic nitric oxide reductase transcription regulator NorR (506 aa).

Asp-57 bears the 4-aspartylphosphate mark. The Sigma-54 factor interaction domain maps to 187–416 (MIGLSPAMTQ…LEHAIHRAVV (230 aa)). ATP is bound by residues 215–222 (GETGTGKE) and 278–287 (ADNGTLFLDE). The H-T-H motif DNA-binding region spans 481 to 500 (WAASARALETDVANLHRLAK).

The protein operates within nitrogen metabolism; nitric oxide reduction. Its function is as follows. Required for the expression of anaerobic nitric oxide (NO) reductase, acts as a transcriptional activator for at least the norVW operon. Activation also requires sigma-54. This chain is Anaerobic nitric oxide reductase transcription regulator NorR, found in Salmonella paratyphi C (strain RKS4594).